A 327-amino-acid polypeptide reads, in one-letter code: Aspartate--ammonia ligase (327 aa).

It belongs to the class-II aminoacyl-tRNA synthetase family. AsnA subfamily.

Its subcellular location is the cytoplasm. The enzyme catalyses L-aspartate + NH4(+) + ATP = L-asparagine + AMP + diphosphate + H(+). It participates in amino-acid biosynthesis; L-asparagine biosynthesis; L-asparagine from L-aspartate (ammonia route): step 1/1. The sequence is that of Aspartate--ammonia ligase from Bacillus cereus (strain G9842).